Reading from the N-terminus, the 477-residue chain is Delayed-rectifier potassium channel regulatory subunit KCNS2 (477 aa).

The Cytoplasmic portion of the chain corresponds to 1–184 (MTRQSLWDVS…LALDNPGYSV (184 aa)). Residues 185 to 206 (LSRVFSVLSILVVLGSIITMCL) traverse the membrane as a helical segment. Residues 207 to 225 (NSLPDFQIPDSQGNPGEDP) are Extracellular-facing. A helical membrane pass occupies residues 226–248 (RFEIVEHFGIAWFTFELVARFAV). Residues 249-259 (APDFLKFFKNA) are Cytoplasmic-facing. Residues 260 to 280 (LNLIDLMSIVPFYITLVVNLV) traverse the membrane as a helical segment. At 281-290 (VESSPTLANL) the chain is on the extracellular side. The chain crosses the membrane as a helical; Voltage-sensor span at residues 291-311 (GRVAQVLRLMRIFRILKLARH). Residues 312 to 326 (STGLRSLGATLKYSY) are Cytoplasmic-facing. A helical transmembrane segment spans residues 327–348 (KEVGLLLLYLSVGISIFSVVAY). At 349–361 (TIEKEENEGLATI) the chain is on the extracellular side. An intramembrane region (helical) is located at residues 362-373 (PACWWWATVSMT). Residues 374 to 379 (TVGYGD) carry the Selectivity filter motif. Residues 374-381 (TVGYGDVV) lie within the membrane without spanning it. Topologically, residues 382 to 388 (PGTTAGK) are extracellular. The helical transmembrane segment at 389-417 (LTASACILAGILVVVLPITLIFNKFSHFY) threads the bilayer. The Cytoplasmic portion of the chain corresponds to 418–477 (RRQKQLESAMRSCDFGDGMKEVPSVNLRDYYAHKVKSLMASLTNMSRSSPSELSLDDSLH).

This sequence belongs to the potassium channel family. S (TC 1.A.1.2) subfamily. Kv9.2/KCNS2 sub-subfamily. In terms of assembly, heterotetramer with KCNB1 and KCNB2. Does not form homomultimers. As to expression, detected in brain, but not in the other tissues tested. Expression was highest in the olfactory bulb, cerebral cortex, hippocampus, habenula, basolateral amygdaloid nuclei and cerebellum.

It is found in the cell membrane. Its function is as follows. Potassium channel regulatory subunit that modulate the delayed rectifier voltage-gated potassium channel activity of KCNB1 and KCNB2 by altering their kinetics, expression levels, and shifting the half-inactivation potential to more polarized values. While it does not form functional channels on its own, it can form functional heterotetrameric channels with KCNB1 and KCNB2. Each regulatory subunit has unique regulatory properties that can lead to extensive inhibition, significant changes in kinetics, and/or substantial shifts in the voltage dependencies of the inactivation process. In Mus musculus (Mouse), this protein is Delayed-rectifier potassium channel regulatory subunit KCNS2.